A 421-amino-acid polypeptide reads, in one-letter code: Putative leucine-rich repeat protein R380 (421 aa).

LRR repeat units follow at residues 48–69 (YLEK…QYLP), 70–85 (KIKE…THIP), 89–110 (NLIK…NQSK), 111–129 (LLYL…IFLP), 130–150 (ECRE…NYFP), 151–172 (NLRI…SSLI), and 173–191 (ELNI…PQLV).

The sequence is that of Putative leucine-rich repeat protein R380 from Acanthamoeba polyphaga (Amoeba).